The primary structure comprises 87 residues: MKTFETLFAELQDRAATRPEGSGTVAALDAGVHAQGKKVLEEAGEVWLAAEHESDESLAEEISQLLYWVQVLMVGRGLKLEDVYRHL.

Belongs to the PRA-PH family.

It localises to the cytoplasm. The catalysed reaction is 1-(5-phospho-beta-D-ribosyl)-ATP + H2O = 1-(5-phospho-beta-D-ribosyl)-5'-AMP + diphosphate + H(+). The protein operates within amino-acid biosynthesis; L-histidine biosynthesis; L-histidine from 5-phospho-alpha-D-ribose 1-diphosphate: step 2/9. The polypeptide is Phosphoribosyl-ATP pyrophosphatase (Nocardia farcinica (strain IFM 10152)).